A 351-amino-acid chain; its full sequence is Nicotinate-nucleotide--dimethylbenzimidazole phosphoribosyltransferase (351 aa).

The Proton acceptor role is filled by glutamate 317.

The protein belongs to the CobT family.

It carries out the reaction 5,6-dimethylbenzimidazole + nicotinate beta-D-ribonucleotide = alpha-ribazole 5'-phosphate + nicotinate + H(+). It participates in nucleoside biosynthesis; alpha-ribazole biosynthesis; alpha-ribazole from 5,6-dimethylbenzimidazole: step 1/2. Catalyzes the synthesis of alpha-ribazole-5'-phosphate from nicotinate mononucleotide (NAMN) and 5,6-dimethylbenzimidazole (DMB). The chain is Nicotinate-nucleotide--dimethylbenzimidazole phosphoribosyltransferase from Bradyrhizobium sp. (strain BTAi1 / ATCC BAA-1182).